A 114-amino-acid polypeptide reads, in one-letter code: DNA-directed RNA polymerase subunit omega (114 aa).

This sequence belongs to the RNA polymerase subunit omega family. The RNAP catalytic core consists of 2 alpha, 1 beta, 1 beta' and 1 omega subunit. When a sigma factor is associated with the core the holoenzyme is formed, which can initiate transcription.

The catalysed reaction is RNA(n) + a ribonucleoside 5'-triphosphate = RNA(n+1) + diphosphate. Its function is as follows. Promotes RNA polymerase assembly. Latches the N- and C-terminal regions of the beta' subunit thereby facilitating its interaction with the beta and alpha subunits. The chain is DNA-directed RNA polymerase subunit omega from Erythrobacter litoralis (strain HTCC2594).